The primary structure comprises 88 residues: Large ribosomal subunit protein bL27 (88 aa).

The tract at residues 1-21 (MAHKKGQGSTQNNRDSAGRRL) is disordered.

It belongs to the bacterial ribosomal protein bL27 family.

This chain is Large ribosomal subunit protein bL27, found in Helicobacter pylori (strain P12).